The primary structure comprises 716 residues: uncharacterized protein (716 aa).

Disordered stretches follow at residues 84–103 (SPSI…ERYP) and 153–189 (VTDE…SQGQ). S97 bears the Phosphoserine mark. Residues K201, K204, K237, K283, and K626 each participate in a glycyl lysine isopeptide (Lys-Gly) (interchain with G-Cter in SUMO2) cross-link.

This is an uncharacterized protein from Mus musculus (Mouse).